The primary structure comprises 468 residues: Putative magnesium transporter MRS2-G (468 aa).

Disordered regions lie at residues 1 to 76 and 182 to 205; these read MGRR…AGKV and NGQPGGDDHGEKHDDSPGDQVPRL. Low complexity-rich tracts occupy residues 14 to 23 and 31 to 45; these read ASNASTSSST and RLPSLTRPRASSSPS. A compositionally biased stretch (pro residues) spans 46 to 67; sequence PASPSPPPPSASHPAPPSPPLA. The segment covering 187-197 has biased composition (basic and acidic residues); the sequence is GDDHGEKHDDS. The next 2 helical transmembrane spans lie at 402–422 and 437–457; these read LTLTIASFGIAVNTFIAGAFA and FFWPFVGGTSSGCFMICIVLL.

Belongs to the CorA metal ion transporter (MIT) (TC 1.A.35.5) family.

Its subcellular location is the membrane. Its function is as follows. Putative magnesium transporter. The chain is Putative magnesium transporter MRS2-G (MRS2-G) from Oryza sativa subsp. indica (Rice).